We begin with the raw amino-acid sequence, 871 residues long: Transient receptor potential cation channel subfamily V member 4 (871 aa).

Disordered regions lie at residues 1–68 (MADP…PNLR) and 110–143 (YGTY…PQPP). The Cytoplasmic segment spans residues 1-469 (MADPGDGPRA…RDKWRKFGAV (469 aa)). The residue at position 110 (tyrosine 110) is a Phosphotyrosine; by SRC-type Tyr-kinases. Over residues 116–129 (HPSDNKRWRRKVVE) the composition is skewed to basic and acidic residues. Residues lysine 192, lysine 197, asparagine 201, 236–239 (YRGQ), and arginine 248 each bind ATP. 2 ANK repeats span residues 237-266 (RGQT…DVHA) and 284-313 (FGEL…KKAD). Residue 249–251 (RCK) coordinates a 1,2-diacyl-sn-glycero-3-phospho-(1D-myo-inositol-4,5-bisphosphate). Tyrosine 253 is modified (phosphotyrosine; by LYN). A 1,2-diacyl-sn-glycero-3-phospho-(1D-myo-inositol-4,5-bisphosphate) contacts are provided by residues 296 to 299 (NQPH) and lysine 344. The ANK 3 repeat unit spans residues 369–398 (DGLSPLMMAAKTGKIGVFQHIIRREVTDED). The helical transmembrane segment at 470 to 490 (SFYINVVSYLCAMVIFTLTAY) threads the bilayer. The Extracellular portion of the chain corresponds to 491–507 (YQPLEGTPPYPYRTTVD). The chain crosses the membrane as a helical span at residues 508–534 (YLRLAGEVITLFTGVLFFFTSIKDLFT). At 535–547 (KKCPGVNSLFVDG) the chain is on the cytoplasmic side. Residues 548–568 (SFQLLYFIYSVLVVVSAALYL) traverse the membrane as a helical segment. At 569–572 (AGIE) the chain is on the extracellular side. A helical transmembrane segment spans residues 573-593 (AYLAVMVFALVLGWMNALYFT). The Cytoplasmic portion of the chain corresponds to 594–608 (RGLKLTGTYSIMIQK). Residues 609–636 (ILFKDLFRFLLVYLLFMIGYASALVTLL) traverse the membrane as a helical segment. Residues 637–665 (NPCTNMKVCDEDQSNCTVPTYPACRDSET) lie on the Extracellular side of the membrane. The N-linked (GlcNAc...) asparagine glycan is linked to asparagine 651. The segment at residues 666 to 685 (FSAFLLDLFKLTIGMGDLEM) is an intramembrane region (pore-forming). A Selectivity filter motif is present at residues 679–682 (GMGD). Position 682 (aspartate 682) interacts with Ca(2+). Topologically, residues 686 to 693 (LSSAKYPV) are extracellular. Residues 694 to 722 (VFILLLVTYIILTFVLLLNMLIALMGETV) traverse the membrane as a helical segment. Over 723 to 871 (GQVSKESKHI…PKWRTDDAPL (149 aa)) the chain is Cytoplasmic. A Phosphotyrosine; by SRC-type Tyr-kinases modification is found at tyrosine 805. Positions 812–831 (HTVGRLRRDRWSSVVPRVVE) are interaction with calmodulin and ITPR3. At serine 824 the chain carries Phosphoserine; by PKC and PKA. Residues 850–871 (NPNCDGHQQGYAPKWRTDDAPL) form a disordered region.

This sequence belongs to the transient receptor (TC 1.A.4) family. TrpV subfamily. TRPV4 sub-subfamily. As to quaternary structure, homotetramer. Interacts with calmodulin. Interacts with CTNNB1. The TRPV4 and CTNNB1 complex can interact with CDH1. Part of a complex containing MLC1, AQP4, HEPACAM and ATP1B1. Interacts with MAP7 and Src family Tyr protein kinases LYN, SRC, FYN, HCK, LCK and YES. Interacts with PACSIN1, PACSIN2 and PACSIN3 (via SH3 domain). Interacts with ITPR3. Interacts with AQP5; the interaction is probably indirect and regulates TRPV4 activation by hypotonicity. Interacts with ANO1. Interacts (via C-terminus) with PKD2 (via C-terminus). Interacts with DDX3X; this interaction is decreased when the channel is activated. Post-translationally, N-glycosylated. Detected in liver, kidney, heart, brain cortex, cerebellum and brainstem (at protein level). Expressed in salivary glands (at protein level). Expressed in heart, lung, spleen, liver, kidney, brain, skeletal muscle and testis. In the central nervous system, expressed in the lamina terminalis (arched vascular organ and neurons of the subfornical organ), median preoptic area, ventral hippocampal commissure, and ependymal cells of the choroid plexus. In the cochlea, expressed in both inner and outer hair cells, and in marginal cells of the cochlear stria vascularis. Expressed in large neurons of the trigeminal ganglion. In the kidney cortex, strongly expressed by epithelial cells of tubules and much weaker in glomeruli.

It localises to the cell membrane. It is found in the apical cell membrane. Its subcellular location is the cell junction. The protein localises to the adherens junction. The protein resides in the cell projection. It localises to the cilium. The enzyme catalyses Ca(2+)(in) = Ca(2+)(out). Non-selective calcium permeant cation channel involved in osmotic sensitivity and mechanosensitivity. Activation by exposure to hypotonicity within the physiological range exhibits an outward rectification. Also activated by heat, low pH, citrate and phorbol esters. Increase of intracellular Ca(2+) potentiates currents. Channel activity seems to be regulated by a calmodulin-dependent mechanism with a negative feedback mechanism. Acts as a regulator of intracellular Ca(2+) in synoviocytes. Plays an obligatory role as a molecular component in the nonselective cation channel activation induced by 4-alpha-phorbol 12,13-didecanoate and hypotonic stimulation in synoviocytes and also regulates production of IL-8. Together with PKD2, forms mechano- and thermosensitive channels in cilium. Promotes cell-cell junction formation in skin keratinocytes and plays an important role in the formation and/or maintenance of functional intercellular barriers. Negatively regulates expression of PPARGC1A, UCP1, oxidative metabolism and respiration in adipocytes. Regulates expression of chemokines and cytokines related to pro-inflammatory pathway in adipocytes. Together with AQP5, controls regulatory volume decrease in salivary epithelial cells. Required for normal development and maintenance of bone and cartilage. In its inactive state, may sequester DDX3X at the plasma membrane. When activated, the interaction between both proteins is affected and DDX3X relocalizes to the nucleus. In neurons of the central nervous system, could play a role in triggering voluntary water intake in response to increased sodium concentration in body fluid. This chain is Transient receptor potential cation channel subfamily V member 4 (Trpv4), found in Mus musculus (Mouse).